The following is a 2892-amino-acid chain: MNPSYGRVRKKVSIISIPEFVPEHYEYENETTASGGASGGGSTRIEFDFDDFEEQIMRKSSMALPSRKLTIANSIDHGNNGNLHIGDIISLYTESSSNQEQRGFLSTLGLVDDRCIVELKDGRPESPPKKFRDCLFKVCPVNRYAAQKHLWTEQKRFQTGDSMFDDDLMNKLKVAADKEREENESEFQKTLGNVIQYGSMVQLLHVKSNKYITVQKNSPAKRERNAMKVYLDRAGNEGSWFIIEPAYKHYAIGDNVSAGNKISLIPNSVSTTQAGHVKSQLHLSSFNLLDHQSAAEVNCLNEPTEWQVFMFLLFDENQQNSVKSGDVVRLFHADQQTFLTLDTIPKQNPPTDVVFLRMTNRPSAADATSSRALWEVQVVQTNAYRGGTAKWNKAYRFKHLATDMYLSAEPSQVQVKPAMNGRRASLIYSKTNNPMAMYSDGPNGVTNESTDTTQQNIPSVWVLGPTKSEFPEEDANLLFQLDPSTFMKSNKEVPRRSYVRLLHQSSDKWVHATNATEKQNLHYSSKNEKGWVKVICEKNRVDKETFALLPVNPDEVRDLDFANDACKALRNFIKLIKIGQVISKESINSTTQLLIDCILFVTNSSDHLADPLKISDFSPSRDRQKLLREQEVLNQVFLLLKAPFLPRQGTTELGPLLSSPSELSDSRNEIFKTMFQLCYCLLKYSQVSYRKNQEFLAEKFGEIQEQIGFDLMAEDTMTAVLHNNPKLLEKYVKTPHVERFVELVRNNRQGKFLDYLADLCVCRGEANKKIQELICTSVLSSKHRDIFMDTKIIDGEIEVGWAPNFRKLVDIAEGAKSNSDDAEHLDYYRHQLDLLSQMCQEQQYLAIDPPPERRLMNISQQLPAELVLQCMSDNRLPYDLRGSFTRLMLHLHVVRGSPMSAIRHARLWWSIPENVNVSTYESVSVEAYSDGSRMRIGEGIAHKVLATVETYLMGLRNQSMEERQSVNSSKLTYEIVNLAKALAQFNFYSFNDLLQLTQNLLAIINEGPATEQVPSHRAMVNAIRNMSKSMMRGGNKENSKDLAKTPSVTAEEAGRTKEGRALNVKTKLIVAEILQFVMDVRRDYRITMALSWFKNVFPCDEDGSLMHSASINERMASELYDAIYRSSGHELHLDGRDGQLLLAILLQMTMSDYPPLTSIALKVFFRHFTQYQELLEDLKQVQLLVSNNDVENYRQIDRDLFILKNLTEKSELWVHGDRHHSIDTKEVDEKERTTEHDLLDHDLKSPRAFDSGDSMEALMAVLNEHYPSIRNECLQLLNRLLIKDDRNDAAVALQELSDKAPLIAYPLIRQMLVRLTGMCYRKGDPKPDTMNQQLLKNMRVYEVVLEFISVPHDKKHDHDMMKLITLSHEFLRSFCKTNKENQSRLYKFISYEKDAKEGMLRVETIEEVGTLVAIFRNNRELASNVPEELIAHIVGLIEHNSRNPIFLELLQALVCVYDKEIESGQEKVANEICAASDEVRQLYVDNASFEELEAMMKDEKESKGRSSDSRRKLKYHIELVRLLAMCTRGKNGNTELKCASQIPMDHIVRVVTAKQCLVEVKTVYLQLLLHCYIDTDAEMKDAYKTEYVDHILNNLLEDIRSLRVEKLTGAETATLEHYICHTVTEVLIKFFEAPYSALQQAKVDVHHHKKTFSEVLLELTYLEKGKLRGSKSSRNWYRVAECIKRLTKWAEEHNITLPATLAGPQMSGQTSVRQKWQQAASSAKWIGIGKRLNRQNTLNPGHRLYGTSNSMTEHTSANVVTCYHMMIGEFKFYLHPLHAAEGSVLVEVLHTPELLFPEGSALRDQCARGGVVAKLIQHCKTLMQNKQDNLCARVLQTLCKMCDCTKQQLTHQGQQLRQLLLQRYFGHHNNHHPPLDRQQSKIGEVIEAVKEKKEETWSQERDLYAIQCKLNDAGASDLVTDIIIMEPSREIFLKAIHLARALLHEGNDKVQHSFYMRMKQKDIHEPFFKAILTRIQTAQNRLKSDMMSCSDSKPKVSLSATVSRRSSTVLTPLIDAGDTGFNGALFEVPQQVRHPSISEMSQLSNDLTHSIPDLAPYQDEEKSTDALPPEVALVEPILRVLQLLCENHNSLLQNFLRKQSDRTNHNLVSETLSFLDTVCGSTKGSLGVFGEIGEHNFSLITQTLATLTEFCQGPCHENQNTMAMQENGLNIIISLVLNEIKPLADDHMELALEIKSQASKLLLAIMESRHDGENANRVLRNMANMSGGPKQLVHAIKQAYEMTNSNHHMLKSISRDLFRQAEDDLKKKSGPQITVNTVTLPEINVDASGIVSIHTEKNISSSLDDKFNDDDIPSVDPREVGHNIYILAHQLAIHDGELEIWLDGSDEKKDDLTREALNYYKERTAQIEIVRRDRTLERVVFPINDICSYLTKDTKDYVYNNTERDNQGSKVTEFFDEWETMYHEMIWQRKLQDRKWLSWCAFRLPLWTRLSFHFAFIVNALVARYYPLPEHSNSSISLGNLYSWFAVFSSFLLAHYLRHDKIYLHKTSLLILASLCFLLLSSIGVTLTLYIFGILQLVNKIVHVVAFVSNKGLEDRPIAEILACRNLHYLLVYLFICILGLLVHPMIYCILLFDIIFTEETLQNVIASVTRNYQSIVWTGLLALILLYFFSILGFLYFRHDFYLEVDPVENDSSATISSGIPSETCPSEGCPGLQPSEKDDNDDEKKVKSCETLWMCILQTGYQGLRNGGGIGDVLRNPAPWEDMFIWRVAYDMTFFVVLIVIVLNLIFGVIIDTFGDLRAEKNEKEQILKNNCFICGLDRSRFDNRSVTFETHRETEHNIWHYLYYIVMLQIKDETEFTGPESYVAQCVKDRNLDWFPRMQALSLQDSELDTDQSEVKQMKDQLLQMMTLMREIISQNEESRAFMEQFQPR.

Residues 1-2475 are Cytoplasmic-facing; sequence MNPSYGRVRK…YPLPEHSNSS (2475 aa). MIR domains are found at residues 192–246, 319–379, 386–466, and 490–551; these read GNVI…IEPA, QNSV…VQVV, GGTA…LGPT, and NKEV…LLPV. A 1D-myo-inositol 1,4,5-trisphosphate-binding site is contributed by 357–361; sequence RMTNR. Residues 625-628 and 689-691 each bind 1D-myo-inositol 1,4,5-trisphosphate; these read KLLR and YRK. The tract at residues 1030–1056 is disordered; it reads MMRGGNKENSKDLAKTPSVTAEEAGRT. Residues 1034–1043 show a composition bias toward basic and acidic residues; the sequence is GNKENSKDLA. Residues 2476–2496 form a helical membrane-spanning segment; it reads ISLGNLYSWFAVFSSFLLAHY. The Extracellular portion of the chain corresponds to 2497 to 2514; sequence LRHDKIYLHKTSLLILAS. Residues 2515–2535 traverse the membrane as a helical segment; it reads LCFLLLSSIGVTLTLYIFGIL. Over 2536–2572 the chain is Cytoplasmic; sequence QLVNKIVHVVAFVSNKGLEDRPIAEILACRNLHYLLV. The chain crosses the membrane as a helical span at residues 2573–2593; the sequence is YLFICILGLLVHPMIYCILLF. Over 2594–2615 the chain is Extracellular; it reads DIIFTEETLQNVIASVTRNYQS. The helical transmembrane segment at 2616 to 2636 threads the bilayer; it reads IVWTGLLALILLYFFSILGFL. At 2637 to 2735 the chain is on the cytoplasmic side; the sequence is YFRHDFYLEV…FIWRVAYDMT (99 aa). Residues 2655-2666 are compositionally biased toward polar residues; it reads ATISSGIPSETC. The tract at residues 2655 to 2685 is disordered; sequence ATISSGIPSETCPSEGCPGLQPSEKDDNDDE. Residues 2736 to 2756 form a helical membrane-spanning segment; the sequence is FFVVLIVIVLNLIFGVIIDTF. Topologically, residues 2757–2892 are extracellular; sequence GDLRAEKNEK…RAFMEQFQPR (136 aa).

This sequence belongs to the InsP3 receptor family. Interacts with myo-1, myo-2, unc-54/myo-4 and nmy-2. Also interacts with iri-1. In terms of tissue distribution, isoform a is expressed in the anterior cells of the pharyngeal terminal bulb, vulva, rectal epithelial cells, spicule protractor muscles of the proctodeum and male-specific neuron CP8 or CP9. Isoform d is expressed in the spermatheca, excretory cell, amphid socket cells, PDA motor neuron, spicule retractor muscles, gubernaculum retractor muscles, posterior oblique muscles, diagonal muscles and the vas deferens. Also expressed in the intestine, pharynx, pharyngeal isthmus, pharyngeal intestinal valve, somatic gonad, hypodermal cells of the vulva, uterine sheath cells, tail, head, LUA motor neuron and the embryonic epidermis (at protein level).

Its subcellular location is the endoplasmic reticulum membrane. In terms of biological role, receptor for inositol 1,4,5-trisphosphate, a second messenger that regulates intracellular calcium homeostasis. Binds in vitro to both inositol 1,4,5-trisphosphate (1,4,5-InsP3) and inositol 2,4,5-trisphosphate (2,4,5-InsP3) with high affinity and does not discriminate between the phosphate at 1 or 2 position. Can also bind inositol 1,3,4,5-tetrakisphosphate (1,3,4,5-InsP4) and inositol 4,5-bisphosphate (4,5-InsP2), but with lower affinity. Acts as a timekeeper/rhythm generator via calcium signaling, affecting the defecation cycle and pharyngeal pumping. Affects normal hermaphrodite and male fertility as a participant in intracellular signaling by acting downstream of let-23/lin-3 which regulates ovulation, spermathecal valve dilation and male mating behavior. Important for early embryonic development; controls epidermal cell migration and may also regulate filopodial protrusive activity during epithelial morphogenesis. Component of inositol trisphosphate (IP3)-mediated downstream signaling pathways that controls amphid sensory neuronal (ASH)-mediated response to nose touch and benzaldehyde but not other ASH-mediated responses. Involved in modulating lifespan, acting downstream of transcription factor atf-6. This is Inositol 1,4,5-trisphosphate receptor itr-1 from Caenorhabditis elegans.